The chain runs to 260 residues: 3'-5' ssDNA/RNA exonuclease TatD (260 aa).

Residues E92, H128, and H153 each contribute to the a divalent metal cation site.

The protein belongs to the metallo-dependent hydrolases superfamily. TatD-type hydrolase family. TatD subfamily. Monomer. It depends on Mg(2+) as a cofactor.

The protein resides in the cytoplasm. Its function is as follows. 3'-5' exonuclease that prefers single-stranded DNA and RNA. May play a role in the H(2)O(2)-induced DNA damage repair. This Yersinia pseudotuberculosis serotype O:3 (strain YPIII) protein is 3'-5' ssDNA/RNA exonuclease TatD.